We begin with the raw amino-acid sequence, 389 residues long: Coproporphyrin III ferrochelatase (389 aa).

Residues S70 and Y139 each contribute to the Fe-coproporphyrin III site. Fe(2+) is bound at residue H205. A disordered region spans residues 207–229; that stretch reads IPSTDAGKSGPSGRPDSGEPWGE. Residue E303 coordinates Fe(2+).

It belongs to the ferrochelatase family.

The protein resides in the cytoplasm. The catalysed reaction is Fe-coproporphyrin III + 2 H(+) = coproporphyrin III + Fe(2+). Its pathway is porphyrin-containing compound metabolism; protoheme biosynthesis. Functionally, involved in coproporphyrin-dependent heme b biosynthesis. Catalyzes the insertion of ferrous iron into coproporphyrin III to form Fe-coproporphyrin III. The polypeptide is Coproporphyrin III ferrochelatase (Leifsonia xyli subsp. xyli (strain CTCB07)).